The primary structure comprises 1216 residues: Histone-lysine N-methyltransferase SETDB1-B (1216 aa).

A coiled-coil region spans residues 38 to 61 (KADLEQLQEWVEQREKEVADIDAL). 2 consecutive Tudor domains span residues 266-329 (RLFV…LKKT) and 356-412 (LLKP…NLKM). The segment at 417–513 (SQEKKMAGQQ…QGMPSDLQPK (97 aa)) is disordered. Residues 467–478 (PVAPQPAGPPQP) show a composition bias toward pro residues. The segment covering 482–498 (ESPSFKSQMAKKSTGQL) has biased composition (polar residues). Positions 595–666 (HRGRNPLLTP…EMFCLDPYVL (72 aa)) constitute an MBD domain. The 74-residue stretch at 728–801 (VGCDCTDGCR…MCTNRLVQHG (74 aa)) folds into the Pre-SET domain. Residues Cys-730, Cys-732, Cys-736, Cys-742, Cys-744, Cys-782, Cys-786, Cys-788, and Cys-793 each coordinate Zn(2+). The SET domain maps to 804–1179 (VRLQLFKTQN…AGTELTWDYN (376 aa)). S-adenosyl-L-methionine-binding positions include 814–816 (KGW), Asp-852, and Tyr-854. Disordered regions lie at residues 892–944 (LPAS…DTFV), 961–1057 (RRQA…KTQA), and 1081–1108 (KSGG…NGPK). Over residues 918 to 940 (DSSEESDDEKDDDSNEDDSDSSD) the composition is skewed to acidic residues. Basic and acidic residues-rich tracts occupy residues 966 to 976 (GLKEESQDSKD) and 983 to 997 (GEDR…ETGK). Residues 1003 to 1016 (WLTNQSSTSANQSV) show a composition bias toward polar residues. Basic and acidic residues-rich tracts occupy residues 1020-1029 (GGIKTEKKDV) and 1046-1055 (DDNKEREKKT). Residues 1082–1105 (SGGGGAGGGGSGPSHGHGGGGGDN) show a composition bias toward gly residues. Residues Arg-1133 and 1136–1137 (NH) each bind S-adenosyl-L-methionine. 4 residues coordinate Zn(2+): Cys-1139, Cys-1192, Cys-1194, and Cys-1199. A Post-SET domain is found at 1188 to 1204 (KELLCCCGSTECRGRLL).

This sequence belongs to the class V-like SAM-binding methyltransferase superfamily. Histone-lysine methyltransferase family. Suvar3-9 subfamily.

It is found in the nucleus. Its subcellular location is the chromosome. It carries out the reaction L-lysyl(4)-[histone H3] + 3 S-adenosyl-L-methionine = N(6),N(6),N(6)-trimethyl-L-lysyl(4)-[histone H3] + 3 S-adenosyl-L-homocysteine + 3 H(+). Histone methyltransferase that specifically trimethylates 'Lys-9' of histone H3. H3 'Lys-9' trimethylation represents a specific tag for epigenetic transcriptional repression by recruiting HP1 (CBX1, CBX3 and/or CBX5) proteins to methylated histones. Mainly functions in euchromatin regions, thereby playing a central role in the silencing of euchromatic genes. H3 'Lys-9' trimethylation is coordinated with DNA methylation. Plays a role in promoter hypermethylation and transcriptional silencing of tumor suppressor genes (TSGs) or other tumor-related genes. Also required to maintain a transcriptionally repressive state of genes in undifferentiated embryonic stem cells (ESCs). Associates at promoter regions of tumor suppressor genes (TSGs) leading to their gene silencing. The sequence is that of Histone-lysine N-methyltransferase SETDB1-B (setdb1b) from Danio rerio (Zebrafish).